A 327-amino-acid chain; its full sequence is Flap endonuclease 1 (327 aa).

The segment at 1–100 is N-domain; it reads MGNADLRQLA…DEIADRREQR (100 aa). Residues Asp28, Asp82, Glu154, Glu156, Asp176, Asp178, and Asp226 each coordinate Mg(2+). The segment at 118–247 is I-domain; that stretch reads EAARLDARTQ…TALDAIGEHG (130 aa). The interaction with PCNA stretch occupies residues 319-327; it reads AQTGLDRWT.

This sequence belongs to the XPG/RAD2 endonuclease family. FEN1 subfamily. As to quaternary structure, interacts with PCNA. PCNA stimulates the nuclease activity without altering cleavage specificity. The cofactor is Mg(2+).

Functionally, structure-specific nuclease with 5'-flap endonuclease and 5'-3' exonuclease activities involved in DNA replication and repair. During DNA replication, cleaves the 5'-overhanging flap structure that is generated by displacement synthesis when DNA polymerase encounters the 5'-end of a downstream Okazaki fragment. Binds the unpaired 3'-DNA end and kinks the DNA to facilitate 5' cleavage specificity. Cleaves one nucleotide into the double-stranded DNA from the junction in flap DNA, leaving a nick for ligation. Also involved in the base excision repair (BER) pathway. Acts as a genome stabilization factor that prevents flaps from equilibrating into structures that lead to duplications and deletions. Also possesses 5'-3' exonuclease activity on nicked or gapped double-stranded DNA. This chain is Flap endonuclease 1, found in Halobacterium salinarum (strain ATCC 29341 / DSM 671 / R1).